A 679-amino-acid polypeptide reads, in one-letter code: Glycine--tRNA ligase beta subunit (679 aa).

Belongs to the class-II aminoacyl-tRNA synthetase family. In terms of assembly, tetramer of two alpha and two beta subunits.

It is found in the cytoplasm. It catalyses the reaction tRNA(Gly) + glycine + ATP = glycyl-tRNA(Gly) + AMP + diphosphate. This is Glycine--tRNA ligase beta subunit from Streptococcus pyogenes serotype M18 (strain MGAS8232).